A 318-amino-acid polypeptide reads, in one-letter code: Taste receptor type 2 member 14 (318 aa).

At 1 to 7 (MGGVIKN) the chain is on the extracellular side. A helical membrane pass occupies residues 8-28 (ISTFVLIVEFIIGNLGNSFIA). At 29 to 55 (LVNCIDWVKRRKISLVDQLLTALAISR) the chain is on the cytoplasmic side. A helical membrane pass occupies residues 56 to 76 (ISLVWLIFGSWCVSAFFPALF). Residues 77 to 87 (ATEKMFRMLTN) lie on the Extracellular side of the membrane. Residues Thr-86 and Trp-89 each coordinate cholesterol. The chain crosses the membrane as a helical span at residues 88–108 (IWAVTNHFSVWLATGLGTFYF). The Cytoplasmic segment spans residues 109–129 (LKIANFSNSIFIYLKWRVKKV). The helical transmembrane segment at 130 to 150 (VLVLLLVTSVFLFLNIALINI) threads the bilayer. The Extracellular portion of the chain corresponds to 151 to 184 (HINASINGYGGNKTCSSDSNDFTRFSSLIALTSS). 2 N-linked (GlcNAc...) asparagine glycosylation sites follow: Asn-153 and Asn-162. Residue Ala-180 coordinates cholesterol. The chain crosses the membrane as a helical span at residues 185–205 (VFIFIPFILSLAIFLLLTFSL). At 206–232 (WKHCKKMQHTVKASGDASTKAHRGVMQ) the chain is on the cytoplasmic side. Residues 233-253 (TVIAFLLLYPIFSLSFFIAVW) traverse the membrane as a helical segment. Topologically, residues 254-261 (TSGWLEEN) are extracellular. A helical membrane pass occupies residues 262–282 (LIILSQVMGMAYPSCHSCILI). 2 residues coordinate cholesterol: Leu-265 and Val-268. At 283–317 (LGNKKLRQASLSVLWWLKYRFKDGEPSGHKGFRES) the chain is on the cytoplasmic side.

This sequence belongs to the G-protein coupled receptor T2R family. As to quaternary structure, core component of the TAS2R14-GNAI1 complex, consisting of TAS2R14, GNAI1, GNB1 and GNG2; within the complex interacts with GNAI1. Core component of the TAS2R14-GNAT3 complex, consisting of TAS2R14, GNAT3, GNB1 and GNG2; within the complex interacts with GNAT3. Core component of the TAS2R14-GNAS2 complex, consisting of TAS2R14, GNAS2, GNB1 and GNG2; within the complex interacts with GNAS2.

Its subcellular location is the membrane. The enzyme catalyses Ca(2+)(in) = Ca(2+)(out). It catalyses the reaction 3',5'-cyclic AMP(in) = 3',5'-cyclic AMP(out). Its activity is regulated as follows. Basal activity is enhanced by binding to bitter tastants, such as flufenamic acid and aristolochic acid. Regulated by cholesterol in a concentration-dependent manner. In terms of biological role, gustducin-linked G-protein coupled receptor that plays a role in the perception of bitterness. The activity of this receptor stimulates GNAT3, activating the gustducin G-protein pathway. Likely plays a role in sensing the chemical composition of the gastrointestinal content and other extra-oral tissues via the inhibitory G-protein pathways. In Pongo pygmaeus (Bornean orangutan), this protein is Taste receptor type 2 member 14 (TAS2R14).